We begin with the raw amino-acid sequence, 257 residues long: Transcription factor GHD7 (257 aa).

The residue at position 68 (Ser-68) is a Phosphoserine; by CK1. Residues Arg-190–Glu-232 enclose the CCT domain. The Nuclear localization signal signature appears at Lys-198–Arg-204. The interval Arg-226–Val-245 is disordered.

As to quaternary structure, interacts with HD16/EL1. Post-translationally, phosphorylated at Ser-68 by HD16/EL1, a casein kinase 1. As to expression, expressed in the apical meristem, developing leaves, leaf sheaths of young seedling, root meristem, epidermal layer of developing stems and branch-primordia of developing panicles.

It is found in the nucleus. In terms of biological role, probable transcription factor involved in the regulation of flowering time under long day (LD) conditions. Plays a major role as repressor of flowering. Controls flowering time by negatively regulating the expression of EHD1 and HD3A. The protein is Transcription factor GHD7 of Oryza sativa subsp. japonica (Rice).